A 789-amino-acid polypeptide reads, in one-letter code: Glycerol-3-phosphate acyltransferase (789 aa).

Positions 275–280 (SHRSYI) match the HXXXXD motif motif.

It belongs to the GPAT/DAPAT family.

Its subcellular location is the cell membrane. The enzyme catalyses sn-glycerol 3-phosphate + an acyl-CoA = a 1-acyl-sn-glycero-3-phosphate + CoA. The protein operates within phospholipid metabolism; CDP-diacylglycerol biosynthesis; CDP-diacylglycerol from sn-glycerol 3-phosphate: step 1/3. This chain is Glycerol-3-phosphate acyltransferase, found in Mycobacterium bovis (strain BCG / Pasteur 1173P2).